A 197-amino-acid chain; its full sequence is MTLDKLIEKLAAKFRIVITKVAVKDHLAYKIEPHFLLPFLKALKESEELRFTVLTDLFGVDFPKKEKRFEVVYNLLSLKLNKNLIIKTHISEKESIPSAMQILSAAYWYELEVYDMYGVNFNGNNDKRRILTDYDFEGHPLRKDFPLTGYTQVKYDKKLEKVTYEPVNLDIEYREFDFSSHWHSPSYVLPGDEKTEE.

It belongs to the complex I 30 kDa subunit family. As to quaternary structure, NDH-1 is composed of 14 different subunits. Subunits NuoB, C, D, E, F, and G constitute the peripheral sector of the complex.

It is found in the cell inner membrane. The catalysed reaction is a quinone + NADH + 5 H(+)(in) = a quinol + NAD(+) + 4 H(+)(out). In terms of biological role, NDH-1 shuttles electrons from NADH, via FMN and iron-sulfur (Fe-S) centers, to quinones in the respiratory chain. The immediate electron acceptor for the enzyme in this species is believed to be ubiquinone. Couples the redox reaction to proton translocation (for every two electrons transferred, four hydrogen ions are translocated across the cytoplasmic membrane), and thus conserves the redox energy in a proton gradient. The sequence is that of NADH-quinone oxidoreductase subunit C from Rickettsia prowazekii (strain Madrid E).